The primary structure comprises 174 residues: Beta-lactoglobulin (174 aa).

The N-terminal stretch at 1-18 is a signal peptide; that stretch reads MKFLLLTVGLALIGAIQA. 2 cysteine pairs are disulfide-bonded: cysteine 79–cysteine 172 and cysteine 122–cysteine 134.

The protein belongs to the calycin superfamily. Lipocalin family. Monomer.

It is found in the secreted. In terms of biological role, lactoglobulin is the primary component of whey, it binds retinol and is probably involved in the transport of that molecule. The protein is Beta-lactoglobulin (LGB) of Notamacropus eugenii (Tammar wallaby).